The chain runs to 653 residues: MPHNSMLKENRLFKPTDEFRRQANISGLETYQALWEFADKDYLTYWSDLARELITWKKPFMHIFDDSEAPFYKWFSDGTLNVSYNCLDRHLPDKADKTALIFESDFGQVQLYTYAKLHNRVCRFANALRELGIKKGDRVIIYLPMLVEAVIAMQACARIGAVHSVVFGGFSASALRDRIEDAEAKLVITANAGLRGGKIIPLKETVDEALEMGCKTIENVIVFHRVNIDTPWKKGRDLWWNELTANQPAFCEPEWMNAEDPLFILYTSGSTGKPKGIVHSTGGYLLGALNSFRNVFDNKPNDIFWCTADVGWITGHSYVCYGPLANGATQVIFEGVPTYPDPGRIWRMIQRHKINVFYTSPTLIRSLTRLGDHIPNKYDLSSLRLLGSVGEPINPSAWMWFYEVVGKSRCPIVDTWWQTETGSIMLAPIPGVTATKPGSCTLPLPGIMAEVLDENGQKCAVEQGGALAIKRPFPSMLRTIWNDPERYKSTYFPAEYGGKYYIAGDNAHRDKDGYFWILGRTDDVLNVSGHRLGTMEIESALVASPKVAEAAVVGKPDEIKGEAIVAFVVLNDFRPEGEEARQLAEELKAWVSNEIGKIARPEDIRFADNLPKTRSGKIMRRLLRSIAKNEMITQDISTLENPQIIGQLQQQWL.

CoA contacts are provided by residues 195–198 (RGGK) and threonine 314. ATP is bound by residues 390 to 392 (GEP), 414 to 419 (DTWWQT), aspartate 505, and arginine 520. Serine 528 contacts CoA. Arginine 531 provides a ligand contact to ATP. Positions 542 and 547 each coordinate Mg(2+). At lysine 617 the chain carries N6-acetyllysine.

The protein belongs to the ATP-dependent AMP-binding enzyme family. It depends on Mg(2+) as a cofactor. Acetylated. Deacetylation by the SIR2-homolog deacetylase activates the enzyme.

The enzyme catalyses acetate + ATP + CoA = acetyl-CoA + AMP + diphosphate. Its function is as follows. Catalyzes the conversion of acetate into acetyl-CoA (AcCoA), an essential intermediate at the junction of anabolic and catabolic pathways. AcsA undergoes a two-step reaction. In the first half reaction, AcsA combines acetate with ATP to form acetyl-adenylate (AcAMP) intermediate. In the second half reaction, it can then transfer the acetyl group from AcAMP to the sulfhydryl group of CoA, forming the product AcCoA. The protein is Acetyl-coenzyme A synthetase of Pasteurella multocida (strain Pm70).